The following is a 250-amino-acid chain: MKTLRTLCVLMILSGVIFFGLKIDAKDIDIPFLNSLKKVVSDSDTDSAANSKKELKGSAKPLDVILYNQMDAPRLYNGCEVTSLAMVLNYAGYDVTKNTLANQVATVPLTYSSGLKGDPNDGFVGDMANGPGLGVYHRPIYQLAKTYAGDKVSDLTGKSISAVYQQLEKGNPVWVITTANFTPVDNMQTWKTPNGTIEITYSEHSVAVTGYDDKYVYLNDPYGYKNRKTDRTSFEKAWKQMGSQAVVIQK.

A signal peptide spans 1–25 (MKTLRTLCVLMILSGVIFFGLKIDA).

This is an uncharacterized protein from Bacillus subtilis (strain 168).